The primary structure comprises 432 residues: 3-phosphoshikimate 1-carboxyvinyltransferase (432 aa).

Positions 23, 24, and 28 each coordinate 3-phosphoshikimate. Residue Lys-23 participates in phosphoenolpyruvate binding. Residues Gly-95 and Arg-123 each contribute to the phosphoenolpyruvate site. Residues Ser-167, Gln-169, Asp-317, and Lys-344 each coordinate 3-phosphoshikimate. Gln-169 contributes to the phosphoenolpyruvate binding site. Asp-317 functions as the Proton acceptor in the catalytic mechanism. Residues Arg-348 and Arg-390 each contribute to the phosphoenolpyruvate site.

It belongs to the EPSP synthase family. In terms of assembly, monomer.

Its subcellular location is the cytoplasm. The enzyme catalyses 3-phosphoshikimate + phosphoenolpyruvate = 5-O-(1-carboxyvinyl)-3-phosphoshikimate + phosphate. It participates in metabolic intermediate biosynthesis; chorismate biosynthesis; chorismate from D-erythrose 4-phosphate and phosphoenolpyruvate: step 6/7. In terms of biological role, catalyzes the transfer of the enolpyruvyl moiety of phosphoenolpyruvate (PEP) to the 5-hydroxyl of shikimate-3-phosphate (S3P) to produce enolpyruvyl shikimate-3-phosphate and inorganic phosphate. This is 3-phosphoshikimate 1-carboxyvinyltransferase from Staphylococcus haemolyticus (strain JCSC1435).